The chain runs to 108 residues: Peptidyl-prolyl cis-trans isomerase FKBP1A (108 aa).

Ser-10 is subject to Phosphoserine. Positions Gly-20 to Glu-108 constitute a PPIase FKBP-type domain. Lys-53 carries the post-translational modification N6-acetyllysine; alternate. Residue Lys-53 is modified to N6-succinyllysine; alternate.

The protein belongs to the FKBP-type PPIase family. FKBP1 subfamily. In terms of assembly, interacts with TGFBR1; prevents TGFBR1 phosphorylation by TGFBR2 and stabilizes it in the inactive conformation. Interacts with ACVR1B and SMAD7. Identified in a complex composed of RYR1, PDE4D, PKA, FKBP1A and protein phosphatase 1 (PP1). Interacts directly with RYR2. Interacts directly with RYR3. Interacts directly with RYR1. Interacts with GLMN; rapamycin and FK506 abolish the interaction with GLMN in a dose dependent manner. As to expression, ubiquitous.

It is found in the cytoplasm. Its subcellular location is the cytosol. The protein localises to the sarcoplasmic reticulum membrane. It carries out the reaction [protein]-peptidylproline (omega=180) = [protein]-peptidylproline (omega=0). With respect to regulation, inhibited by both FK506 and rapamycin. In terms of biological role, keeps in an inactive conformation TGFBR1, the TGF-beta type I serine/threonine kinase receptor, preventing TGF-beta receptor activation in absence of ligand. Recruits SMAD7 to ACVR1B which prevents the association of SMAD2 and SMAD3 with the activin receptor complex, thereby blocking the activin signal. May modulate the RYR1 calcium channel activity. PPIases accelerate the folding of proteins. It catalyzes the cis-trans isomerization of proline imidic peptide bonds in oligopeptides. In Rattus norvegicus (Rat), this protein is Peptidyl-prolyl cis-trans isomerase FKBP1A (Fkbp1a).